Here is a 108-residue protein sequence, read N- to C-terminus: Cell division topological specificity factor (108 aa).

Belongs to the MinE family.

Its function is as follows. Prevents the cell division inhibition by proteins MinC and MinD at internal division sites while permitting inhibition at polar sites. This ensures cell division at the proper site by restricting the formation of a division septum at the midpoint of the long axis of the cell. In Prochlorococcus marinus (strain MIT 9215), this protein is Cell division topological specificity factor.